We begin with the raw amino-acid sequence, 229 residues long: Ribonuclease T (229 aa).

Residues 23–197 form the Exonuclease domain; the sequence is VIIDVETAGF…YDTERTAKLF (175 aa). Mg(2+) contacts are provided by aspartate 26, glutamate 28, histidine 184, and aspartate 189. Histidine 184 serves as the catalytic Proton donor/acceptor.

This sequence belongs to the RNase T family. In terms of assembly, homodimer. Mg(2+) serves as cofactor.

In terms of biological role, trims short 3' overhangs of a variety of RNA species, leaving a one or two nucleotide 3' overhang. Responsible for the end-turnover of tRNA: specifically removes the terminal AMP residue from uncharged tRNA (tRNA-C-C-A). Also appears to be involved in tRNA biosynthesis. The chain is Ribonuclease T from Haemophilus influenzae (strain PittGG).